A 590-amino-acid polypeptide reads, in one-letter code: Acetolactate synthase large subunit (590 aa).

Residue Glu-61 participates in thiamine diphosphate binding. Residues Arg-163, 271-292, and 314-333 each bind FAD; these read HGTA…LGAR and DIDP…IVGD. The tract at residues 405–484 is thiamine pyrophosphate binding; the sequence is QHQMWSAQFL…IKIVIINNRW (80 aa). Mg(2+) is bound by residues Asp-455 and Asn-482.

Belongs to the TPP enzyme family. In terms of assembly, dimer of large and small chains. Mg(2+) serves as cofactor. Requires thiamine diphosphate as cofactor.

Its subcellular location is the plastid. The protein resides in the chloroplast. The enzyme catalyses 2 pyruvate + H(+) = (2S)-2-acetolactate + CO2. It functions in the pathway amino-acid biosynthesis; L-isoleucine biosynthesis; L-isoleucine from 2-oxobutanoate: step 1/4. The protein operates within amino-acid biosynthesis; L-valine biosynthesis; L-valine from pyruvate: step 1/4. This Porphyra purpurea (Red seaweed) protein is Acetolactate synthase large subunit (ilvB).